The following is a 247-amino-acid chain: MAGHSKWANIQHRKGRQDAKRGKMFTKAAKEIIIAAKAGGDPVGNSRLRAAIAAAKAINLPKDKIENAIKKGTGELAGGDILEMAYEGYGPGGVALIVEVATDNKNRTVAEVRHILSKHGGSMGESGCVAWMFDRKGVITLEKDKYTEEQLMEVALEAGAEDVTDEGESWEVVTAAADFNAVREALEAAGVEMQSAEFTMVPQNEIEVDAETGRKLMRLVDALEDNDDVQNVHANFDLPDELLAELG.

The disordered stretch occupies residues 1 to 22 (MAGHSKWANIQHRKGRQDAKRG).

Belongs to the TACO1 family.

The protein localises to the cytoplasm. The polypeptide is Probable transcriptional regulatory protein DVU_2259 (Nitratidesulfovibrio vulgaris (strain ATCC 29579 / DSM 644 / CCUG 34227 / NCIMB 8303 / VKM B-1760 / Hildenborough) (Desulfovibrio vulgaris)).